Reading from the N-terminus, the 502-residue chain is Mannitol 2-dehydrogenase (502 aa).

Position 37–48 (37–48 (IVHIGVGGFHRA)) interacts with NAD(+).

This sequence belongs to the mannitol dehydrogenase family. In terms of assembly, monomer.

It catalyses the reaction D-mannitol + NAD(+) = D-fructose + NADH + H(+). Functionally, catalyzes the NAD(H)-dependent interconversion of D-fructose and D-mannitol in the mannitol metabolic pathway. This chain is Mannitol 2-dehydrogenase, found in Aspergillus clavatus (strain ATCC 1007 / CBS 513.65 / DSM 816 / NCTC 3887 / NRRL 1 / QM 1276 / 107).